Consider the following 335-residue polypeptide: Mevalonate kinase (335 aa).

Residue P111–A121 coordinates ATP. The active-site Proton acceptor is D162.

It belongs to the GHMP kinase family. Mevalonate kinase subfamily. As to quaternary structure, homodimer. Mg(2+) serves as cofactor.

It localises to the cytoplasm. It carries out the reaction (R)-mevalonate + ATP = (R)-5-phosphomevalonate + ADP + H(+). It participates in isoprenoid biosynthesis; isopentenyl diphosphate biosynthesis via mevalonate pathway; isopentenyl diphosphate from (R)-mevalonate: step 1/3. Catalyzes the phosphorylation of (R)-mevalonate (MVA) to (R)-mevalonate 5-phosphate (MVAP). Functions in the mevalonate (MVA) pathway leading to isopentenyl diphosphate (IPP), a key precursor for the biosynthesis of isoprenoid compounds such as archaeal membrane lipids. The chain is Mevalonate kinase from Pyrococcus abyssi (strain GE5 / Orsay).